Consider the following 550-residue polypeptide: Arginine--tRNA ligase (550 aa).

Positions A130–G140 match the 'HIGH' region motif.

The protein belongs to the class-I aminoacyl-tRNA synthetase family. In terms of assembly, monomer.

It is found in the cytoplasm. The enzyme catalyses tRNA(Arg) + L-arginine + ATP = L-arginyl-tRNA(Arg) + AMP + diphosphate. This Corynebacterium efficiens (strain DSM 44549 / YS-314 / AJ 12310 / JCM 11189 / NBRC 100395) protein is Arginine--tRNA ligase.